Consider the following 448-residue polypeptide: Gamma conglutin 2 (448 aa).

The N-terminal stretch at 1–33 is a signal peptide; sequence MAKNMAQIFPFIAVFLSCSFIFVLSSSQNSQSL. In terms of domain architecture, Peptidase A1 spans 63–428; it reads HWANIHKRTP…DLERSRVEFN (366 aa). Disulfide bonds link cysteine 91–cysteine 181, cysteine 105–cysteine 118, cysteine 110–cysteine 136, cysteine 121–cysteine 131, and cysteine 349–cysteine 390. N-linked (GlcNAc...) asparagine glycosylation is present at asparagine 133.

Belongs to the peptidase A1 family. Two-subunit monomeric unit made of alpha and beta subunits coupled by disulfide bonds (at pH 4.5 and under non-reducing conditions). Can also form oligomers including dimer, tetramer and cyclic hexamer (trimer of dimers) (at pH &gt; 5.5). Component of globulins complexes which accumulate in seeds. Interacts with flavonoids (e.g. apigenin glucosides) present in globulins complexes. Post-translationally, glycosylated on alpha chain. In terms of tissue distribution, expressed in developing seeds and in the young roots and cotyledons of germinating seeds and young seedlings.

It localises to the secreted. It is found in the extracellular space. In terms of biological role, sulfur-rich seed storage protein that remains undegraded at germination. This is Gamma conglutin 2 from Lupinus albus (White lupine).